A 308-amino-acid chain; its full sequence is S-crystallin SL18 (308 aa).

In terms of domain architecture, GST N-terminal spans 2 to 80 (PKYTLYYFNS…YLARQFGFYG (79 aa)). The interval 165–205 (EMRSQDSMVEPPSQKLSPELESQSSLCSERPQCGPPDPMMG) is disordered. Polar residues predominate over residues 178–191 (QKLSPELESQSSLC). In terms of domain architecture, GST C-terminal spans 185-308 (ESQSSLCSER…YFTLRNYTDF (124 aa)).

The protein belongs to the GST superfamily. Lens.

In terms of biological role, S-crystallins are structural components of squids and octopi eye lens. Contains relatively little if any GST activity. This is S-crystallin SL18 from Nototodarus sloanii (Wellington flying squid).